We begin with the raw amino-acid sequence, 341 residues long: Ketol-acid reductoisomerase (NADP(+)) (341 aa).

The region spanning 3–184 (LKVYYDKDCD…GGGRSGIIET (182 aa)) is the KARI N-terminal Rossmann domain. Residues 26 to 29 (FGSQ), Ser-54, and 84 to 87 (DELQ) each bind NADP(+). The active site involves His-109. Gly-135 is a binding site for NADP(+). Residues 185-330 (TFKDETETDL…GRLRAMMPWI (146 aa)) enclose the KARI C-terminal knotted domain. 4 residues coordinate Mg(2+): Asp-193, Glu-197, Glu-229, and Glu-233. Substrate is bound at residue Ser-254.

It belongs to the ketol-acid reductoisomerase family. Mg(2+) is required as a cofactor.

It carries out the reaction (2R)-2,3-dihydroxy-3-methylbutanoate + NADP(+) = (2S)-2-acetolactate + NADPH + H(+). It catalyses the reaction (2R,3R)-2,3-dihydroxy-3-methylpentanoate + NADP(+) = (S)-2-ethyl-2-hydroxy-3-oxobutanoate + NADPH + H(+). It functions in the pathway amino-acid biosynthesis; L-isoleucine biosynthesis; L-isoleucine from 2-oxobutanoate: step 2/4. The protein operates within amino-acid biosynthesis; L-valine biosynthesis; L-valine from pyruvate: step 2/4. Functionally, involved in the biosynthesis of branched-chain amino acids (BCAA). Catalyzes an alkyl-migration followed by a ketol-acid reduction of (S)-2-acetolactate (S2AL) to yield (R)-2,3-dihydroxy-isovalerate. In the isomerase reaction, S2AL is rearranged via a Mg-dependent methyl migration to produce 3-hydroxy-3-methyl-2-ketobutyrate (HMKB). In the reductase reaction, this 2-ketoacid undergoes a metal-dependent reduction by NADPH to yield (R)-2,3-dihydroxy-isovalerate. The polypeptide is Ketol-acid reductoisomerase (NADP(+)) (Helicobacter hepaticus (strain ATCC 51449 / 3B1)).